The following is a 233-amino-acid chain: MRIPQHVAIIMDGNGRWAKKRGLPRIKGHQRGAEVLHNTVKWSLELGIKYLTAFSFSTENWKRPKEEVEFLMDLFVQMIDREMELLRRERVRVRILGRKEGLPEKVLKKWQEVEEKTKEFDRMTLIIAFNYGGRREILDAVEFILKDVSHGKKIELTEETFRQYLYLPDVPDPDLIIRTSGEMRLSNFLLWQSAYSELYFFKKLWPDFTKRDFLRAIESYSKRERRFGGLING.

Residue Asp12 is part of the active site. Asp12 serves as a coordination point for Mg(2+). Residues 13–16 (GNGR), Trp17, Arg25, His29, and 57–59 (STE) each bind substrate. Catalysis depends on Asn60, which acts as the Proton acceptor. Substrate is bound by residues Trp61, Arg63, Arg178, and 184-186 (RLS). Glu197 is a binding site for Mg(2+).

The protein belongs to the UPP synthase family. In terms of assembly, homodimer. Requires Mg(2+) as cofactor.

Functionally, catalyzes the condensation of isopentenyl diphosphate (IPP) with allylic pyrophosphates generating different type of terpenoids. The chain is Isoprenyl transferase from Thermotoga maritima (strain ATCC 43589 / DSM 3109 / JCM 10099 / NBRC 100826 / MSB8).